The sequence spans 40 residues: Natriuretic peptide PaNP-b (40 aa).

A disulfide bridge links cysteine 9 with cysteine 25. Residues 36-40 constitute a propeptide that is removed on maturation; the sequence is IPGGS.

The protein belongs to the natriuretic peptide family. As to expression, expressed by the venom gland.

The protein resides in the secreted. Snake venom natriuretic peptide that targets both NPR1 and NPR2. Exhibits hypotensive and vasodepressor activities. The protein is Natriuretic peptide PaNP-b of Pseudechis australis (Mulga snake).